A 23-amino-acid polypeptide reads, in one-letter code: Benzaldehyde dehydrogenase [NAD(+)] I (23 aa).

It belongs to the aldehyde dehydrogenase family. As to quaternary structure, homotetramer.

The enzyme catalyses benzaldehyde + NAD(+) + H2O = benzoate + NADH + 2 H(+). In Acinetobacter guillouiae (Acinetobacter genomosp. 11), this protein is Benzaldehyde dehydrogenase [NAD(+)] I.